Consider the following 118-residue polypeptide: Fluoride-specific ion channel FluC 2 (118 aa).

4 consecutive transmembrane segments (helical) span residues 1-21, 33-53, 55-75, and 93-113; these read MMEA…RFAI, FPIA…YIIG, GVTT…FTTF, and ILFL…FLGM. Residues Gly-70 and Thr-73 each coordinate Na(+).

The protein belongs to the fluoride channel Fluc/FEX (TC 1.A.43) family.

It is found in the cell membrane. It catalyses the reaction fluoride(in) = fluoride(out). Na(+) is not transported, but it plays an essential structural role and its presence is essential for fluoride channel function. Functionally, fluoride-specific ion channel. Important for reducing fluoride concentration in the cell, thus reducing its toxicity. This is Fluoride-specific ion channel FluC 2 from Bacillus cereus (strain ATCC 10987 / NRS 248).